Here is a 467-residue protein sequence, read N- to C-terminus: L-seryl-tRNA(Sec) selenium transferase (467 aa).

Residue Lys-298 is modified to N6-(pyridoxal phosphate)lysine.

This sequence belongs to the SelA family. It depends on pyridoxal 5'-phosphate as a cofactor.

The protein resides in the cytoplasm. It carries out the reaction L-seryl-tRNA(Sec) + selenophosphate + H(+) = L-selenocysteinyl-tRNA(Sec) + phosphate. It functions in the pathway aminoacyl-tRNA biosynthesis; selenocysteinyl-tRNA(Sec) biosynthesis; selenocysteinyl-tRNA(Sec) from L-seryl-tRNA(Sec) (bacterial route): step 1/1. In terms of biological role, converts seryl-tRNA(Sec) to selenocysteinyl-tRNA(Sec) required for selenoprotein biosynthesis. In Alkaliphilus metalliredigens (strain QYMF), this protein is L-seryl-tRNA(Sec) selenium transferase.